The sequence spans 171 residues: MMSKVFFDITIGSDTAGRIVMELFDEVTPKTAENFRALCTGEKGVGKAGKPLHFKGSHFHRVITDFMAQGGDFTRGNGTGGESIYGEKFADENFQLKHDRPGLLSMANAGPNTNGSQFFLTFVPCPWLDGKHVVFGEVVEGLEILEQLEANGSQSGQTKQAIVISDCGEIK.

The PPIase cyclophilin-type domain occupies 6-169; the sequence is FFDITIGSDT…QAIVISDCGE (164 aa).

It belongs to the cyclophilin-type PPIase family.

It carries out the reaction [protein]-peptidylproline (omega=180) = [protein]-peptidylproline (omega=0). Its function is as follows. PPIases accelerate the folding of proteins. It catalyzes the cis-trans isomerization of proline imidic peptide bonds in oligopeptides. In Synechocystis sp. (strain ATCC 27184 / PCC 6803 / Kazusa), this protein is Peptidyl-prolyl cis-trans isomerase slr1251.